The sequence spans 427 residues: Enolase (427 aa).

Residue glutamine 162 participates in (2R)-2-phosphoglycerate binding. Glutamate 204 (proton donor) is an active-site residue. Mg(2+)-binding residues include aspartate 241, glutamate 284, and aspartate 311. 4 residues coordinate (2R)-2-phosphoglycerate: lysine 336, arginine 365, serine 366, and lysine 387. Catalysis depends on lysine 336, which acts as the Proton acceptor.

Belongs to the enolase family. Requires Mg(2+) as cofactor.

Its subcellular location is the cytoplasm. It localises to the secreted. The protein resides in the cell surface. It catalyses the reaction (2R)-2-phosphoglycerate = phosphoenolpyruvate + H2O. It participates in carbohydrate degradation; glycolysis; pyruvate from D-glyceraldehyde 3-phosphate: step 4/5. In terms of biological role, catalyzes the reversible conversion of 2-phosphoglycerate (2-PG) into phosphoenolpyruvate (PEP). It is essential for the degradation of carbohydrates via glycolysis. This Natranaerobius thermophilus (strain ATCC BAA-1301 / DSM 18059 / JW/NM-WN-LF) protein is Enolase.